The primary structure comprises 268 residues: Tryptophan synthase alpha chain (268 aa).

Catalysis depends on proton acceptor residues Glu-49 and Asp-60.

This sequence belongs to the TrpA family. Tetramer of two alpha and two beta chains.

The enzyme catalyses (1S,2R)-1-C-(indol-3-yl)glycerol 3-phosphate + L-serine = D-glyceraldehyde 3-phosphate + L-tryptophan + H2O. The protein operates within amino-acid biosynthesis; L-tryptophan biosynthesis; L-tryptophan from chorismate: step 5/5. Its function is as follows. The alpha subunit is responsible for the aldol cleavage of indoleglycerol phosphate to indole and glyceraldehyde 3-phosphate. In Vibrio cholerae serotype O1 (strain ATCC 39541 / Classical Ogawa 395 / O395), this protein is Tryptophan synthase alpha chain.